The following is a 481-amino-acid chain: NADH-quinone oxidoreductase subunit N (481 aa).

14 consecutive transmembrane segments (helical) span residues 11-31, 38-58, 74-94, 103-123, 128-148, 163-183, 208-228, 241-261, 272-292, 300-322, 332-352, 368-388, 404-424, and 450-470; these read ALPE…DLWA, WTHY…LAVW, GMSR…FVYA, IFKG…SVMV, FLTA…LIAL, FVLG…VYGA, LGLV…PFHM, VTAL…FRIL, WSLM…LAAI, MLAY…GAVG, TYAL…DGDN, VWLA…PPLM, GYVW…FYYL, and SLLS…QTVI.

It belongs to the complex I subunit 2 family. As to quaternary structure, NDH-1 is composed of 14 different subunits. Subunits NuoA, H, J, K, L, M, N constitute the membrane sector of the complex.

The protein localises to the cell inner membrane. The enzyme catalyses a quinone + NADH + 5 H(+)(in) = a quinol + NAD(+) + 4 H(+)(out). In terms of biological role, NDH-1 shuttles electrons from NADH, via FMN and iron-sulfur (Fe-S) centers, to quinones in the respiratory chain. The immediate electron acceptor for the enzyme in this species is believed to be ubiquinone. Couples the redox reaction to proton translocation (for every two electrons transferred, four hydrogen ions are translocated across the cytoplasmic membrane), and thus conserves the redox energy in a proton gradient. This Neisseria gonorrhoeae (strain ATCC 700825 / FA 1090) protein is NADH-quinone oxidoreductase subunit N.